The sequence spans 349 residues: Tribbles homolog 3 (349 aa).

Positions 1 to 122 are interaction with DDIT3/CHOP; that stretch reads MRATSLAASA…QHVARPTEVL (122 aa). The segment at 35–57 is disordered; sequence VRDEPEPGPTPSLPPASDLSPAV. The 248-residue stretch at 63–310 folds into the Protein kinase domain; it reads LGPYILLERE…ALGILLHPWL (248 aa). The disordered stretch occupies residues 317-349; sequence VSPPRSDRREMDQVVPDGPQLEEAEEGEVGLYG. Residues 336–349 show a composition bias toward acidic residues; that stretch reads QLEEAEEGEVGLYG.

The protein belongs to the protein kinase superfamily. CAMK Ser/Thr protein kinase family. Tribbles subfamily. As to quaternary structure, interacts with AKT1, AKT2, MAP2K1 and MAP2K7. Interacts with ATF4. Interacts with DDIT3/CHOP and inhibits its interaction with EP300/P300. Interacts with APOBEC3C. Interacts (via N-terminus) with APOBEC3A. Interacts with RELA. Detected only in the lung. Not detected in the heart, brain, spleen, liver, skeletal muscle, kidney and testis.

The protein localises to the nucleus. Functionally, inactive protein kinase which acts as a regulator of the integrated stress response (ISR), a process for adaptation to various stress. Inhibits the transcriptional activity of DDIT3/CHOP and is involved in DDIT3/CHOP-dependent cell death during ER stress. May play a role in programmed neuronal cell death but does not appear to affect non-neuronal cells. Acts as a negative feedback regulator of the ATF4-dependent transcription during the ISR: while TRIB3 expression is promoted by ATF4, TRIB3 protein interacts with ATF4 and inhibits ATF4 transcription activity. Disrupts insulin signaling by binding directly to Akt kinases and blocking their activation. May bind directly to and mask the 'Thr-308' phosphorylation site in AKT1. Interacts with the NF-kappa-B transactivator p65 RELA and inhibits its phosphorylation and thus its transcriptional activation activity. Interacts with MAPK kinases and regulates activation of MAP kinases. Can inhibit APOBEC3A editing of nuclear DNA. The protein is Tribbles homolog 3 (Trib3) of Rattus norvegicus (Rat).